A 155-amino-acid chain; its full sequence is Fibroblast growth factor 1 (155 aa).

Residue alanine 2 is modified to N-acetylalanine. A Nuclear localization signal motif is present at residues 24-27 (KKPK). Residues 24-28 (KKPKL) and 113-116 (ISKK) each bind heparin.

The protein belongs to the heparin-binding growth factors family. Monomer. Homodimer. Interacts with FGFR1, FGFR2, FGFR3 and FGFR4. Affinity between fibroblast growth factors (FGFs) and their receptors is increased by heparan sulfate glycosaminoglycans that function as coreceptors. Found in a complex with FGFBP1, FGF1 and FGF2. Interacts with FGFBP1. Part of a Cu(2+)-dependent multiprotein aggregate containing FGF1, S100A13 and SYT1. Interacts with S100A13. Interacts with FGFBP1. Interacts with LRRC59. Interacts with CSNKA, CSNKB and FIBP. While binding with LRRC59, CSNKA and FIBP seem mutually exclusive, CSNKB and FIBP may cooperatively interact with FGF1. Interacts with SYT1. Forms a ternary complex with FGFR1 and ITGAV:ITGB3 and induces the recruitment of PTPN11 to the complex. In terms of processing, in the nucleus, phosphorylated by PKC/PRKCD.

It localises to the secreted. Its subcellular location is the cytoplasm. The protein localises to the cell cortex. The protein resides in the cytosol. It is found in the nucleus. In terms of biological role, plays an important role in the regulation of cell survival, cell division, angiogenesis, cell differentiation and cell migration. Functions as a potent mitogen in vitro. Acts as a ligand for FGFR1 and integrins. Binds to FGFR1 in the presence of heparin leading to FGFR1 dimerization and activation via sequential autophosphorylation on tyrosine residues which act as docking sites for interacting proteins, leading to the activation of several signaling cascades. Binds to integrin ITGAV:ITGB3. Its binding to integrin, subsequent ternary complex formation with integrin and FGFR1, and the recruitment of PTPN11 to the complex are essential for FGF1 signaling. Induces the phosphorylation and activation of FGFR1, FRS2, MAPK3/ERK1, MAPK1/ERK2 and AKT1. Can induce angiogenesis. In Bos taurus (Bovine), this protein is Fibroblast growth factor 1 (FGF1).